We begin with the raw amino-acid sequence, 710 residues long: Zinc finger and BTB domain-containing protein 24 (710 aa).

A BTB domain is found at 37–103 (CDITLIVENV…IYTGYLHASE (67 aa)). Disordered stretches follow at residues 134–176 (APKP…EGRS) and 202–256 (EEDS…SRRR). Residues 159 to 171 (KRKRGRPRKANGL) constitute a DNA-binding region (a.T hook). 2 stretches are compositionally biased toward basic and acidic residues: residues 202 to 219 (EEDS…KESE) and 231 to 244 (PAEK…KAGD). 8 C2H2-type zinc fingers span residues 293 to 315 (ARCK…QRRH), 321 to 343 (FKCN…TRMH), 349 to 371 (YTCT…MSLH), 377 to 399 (FTCD…YRVH), 405 to 427 (PECS…LRTH), 433 to 455 (FTCE…IRIH), 461 to 483 (YSCS…CILH), and 489 to 511 (FSCP…LKIH). The interval 651–676 (EQTTSSVPAADTGARATPVPSTRPGA) is disordered.

The protein belongs to the krueppel C2H2-type zinc-finger protein family. In terms of assembly, interacts with MN1. In terms of tissue distribution, widely expressed. Highest level in liver, testis and kidney.

The protein localises to the nucleus. Its function is as follows. May be involved in BMP2-induced transcription. The polypeptide is Zinc finger and BTB domain-containing protein 24 (Zbtb24) (Mus musculus (Mouse)).